A 251-amino-acid chain; its full sequence is GTP cyclohydrolase 1 type 2 homolog (251 aa).

5 residues coordinate a divalent metal cation: histidine 64, histidine 65, aspartate 102, histidine 219, and glutamate 223.

Belongs to the GTP cyclohydrolase I type 2/NIF3 family. Homohexamer.

The chain is GTP cyclohydrolase 1 type 2 homolog from Chlamydia trachomatis serovar D (strain ATCC VR-885 / DSM 19411 / UW-3/Cx).